Reading from the N-terminus, the 214-residue chain is Calcineurin B homologous protein 3 (214 aa).

The N-myristoyl glycine moiety is linked to residue glycine 2. The 36-residue stretch at 110–145 folds into the EF-hand domain; that stretch reads CRKDKLRFLFNMYDTDNDSKITLEEYRKVVEELLSG. The Ca(2+) site is built by aspartate 123, aspartate 125, aspartate 127, lysine 129, and glutamate 134.

Belongs to the calcineurin regulatory subunit family. CHP subfamily. As to quaternary structure, monomer. Homodimer.

It localises to the nucleus. Its subcellular location is the cytoplasm. The protein localises to the membrane. The protein resides in the cell membrane. It is found in the cell projection. It localises to the lamellipodium. Its subcellular location is the ruffle membrane. Functions as an integral cofactor in cell pH regulation by controlling plasma membrane-type Na(+)/H(+) exchange activity. Promotes the induction of hematopoietic stem cell differentiation toward megakaryocytic lineage. Essential for the coupling of ERK cascade activation with the expression of ETS family genes in megakaryocytic differentiation. Also involved in granulocytic differentiation in a ERK-dependent manner. Inhibits the phosphatase activity of calcineurin. In Xenopus tropicalis (Western clawed frog), this protein is Calcineurin B homologous protein 3 (tesc).